Consider the following 314-residue polypeptide: Large ribosomal subunit protein uL10 (314 aa).

A disordered region spans residues 285 to 314 (GAAAGGAAAEEEKEEEEESDEEGGFGDLFG). Residues 293 to 308 (AEEEKEEEEESDEEGG) show a composition bias toward acidic residues. Position 303 is a phosphoserine; by CK1 (Ser303).

Belongs to the universal ribosomal protein uL10 family. As to quaternary structure, component of the large ribosomal subunit. P0 forms a pentameric complex by interaction with dimers of P1 and P2. In terms of processing, phosphorylated.

In terms of biological role, ribosomal protein P0 is the functional equivalent of E.coli protein L10. The polypeptide is Large ribosomal subunit protein uL10 (Podospora anserina (Pleurage anserina)).